Consider the following 372-residue polypeptide: DNA replication and repair protein RecF (372 aa).

Position 30–37 (30–37 (GENGQGKT)) interacts with ATP.

The protein belongs to the RecF family.

It localises to the cytoplasm. Functionally, the RecF protein is involved in DNA metabolism; it is required for DNA replication and normal SOS inducibility. RecF binds preferentially to single-stranded, linear DNA. It also seems to bind ATP. The sequence is that of DNA replication and repair protein RecF from Anaeromyxobacter dehalogenans (strain 2CP-1 / ATCC BAA-258).